Consider the following 281-residue polypeptide: 4-diphosphocytidyl-2-C-methyl-D-erythritol kinase (281 aa).

Residue lysine 15 is part of the active site. Residue 98-108 (PTGAGLGGGSS) participates in ATP binding. Aspartate 140 is a catalytic residue.

It belongs to the GHMP kinase family. IspE subfamily.

The catalysed reaction is 4-CDP-2-C-methyl-D-erythritol + ATP = 4-CDP-2-C-methyl-D-erythritol 2-phosphate + ADP + H(+). The protein operates within isoprenoid biosynthesis; isopentenyl diphosphate biosynthesis via DXP pathway; isopentenyl diphosphate from 1-deoxy-D-xylulose 5-phosphate: step 3/6. Its function is as follows. Catalyzes the phosphorylation of the position 2 hydroxy group of 4-diphosphocytidyl-2C-methyl-D-erythritol. This chain is 4-diphosphocytidyl-2-C-methyl-D-erythritol kinase, found in Neisseria meningitidis serogroup B (strain ATCC BAA-335 / MC58).